Here is a 296-residue protein sequence, read N- to C-terminus: Putative gluconeogenesis factor (296 aa).

It belongs to the gluconeogenesis factor family.

It localises to the cytoplasm. Functionally, required for morphogenesis under gluconeogenic growth conditions. The polypeptide is Putative gluconeogenesis factor (Vibrio cholerae serotype O1 (strain ATCC 39315 / El Tor Inaba N16961)).